The primary structure comprises 209 residues: Probable GTP-binding protein EngB (209 aa).

The region spanning 12 to 203 (INLEIIFAGR…RDRLHEMKRD (192 aa)) is the EngB-type G domain. Residues 20–27 (GRSNVGKS), 45–49 (GVTLR), 62–65 (DMPG), 142–145 (NKMD), and 179–181 (ISA) each bind GTP. The Mg(2+) site is built by Ser27 and Thr47.

The protein belongs to the TRAFAC class TrmE-Era-EngA-EngB-Septin-like GTPase superfamily. EngB GTPase family. Mg(2+) serves as cofactor.

Functionally, necessary for normal cell division and for the maintenance of normal septation. This is Probable GTP-binding protein EngB from Methanosarcina mazei (strain ATCC BAA-159 / DSM 3647 / Goe1 / Go1 / JCM 11833 / OCM 88) (Methanosarcina frisia).